A 353-amino-acid polypeptide reads, in one-letter code: RNA replication protein (353 aa).

The 108-residue stretch at 137 to 244 folds into the RdRp catalytic domain; that stretch reads GVCTESDYEA…NRALFIKDTH (108 aa).

It belongs to the potexviruses/carlaviruses RNA replication protein family.

The catalysed reaction is RNA(n) + a ribonucleoside 5'-triphosphate = RNA(n+1) + diphosphate. It catalyses the reaction ATP + H2O = ADP + phosphate + H(+). Its function is as follows. RNA replication. The central part of this protein possibly functions as an ATP-binding helicase. The polypeptide is RNA replication protein (Potato virus S (strain Peruvian)).